A 75-amino-acid polypeptide reads, in one-letter code: Large ribosomal subunit protein bL31 (75 aa).

Residues C16, C18, C36, and C39 each contribute to the Zn(2+) site.

It belongs to the bacterial ribosomal protein bL31 family. Type A subfamily. As to quaternary structure, part of the 50S ribosomal subunit. Requires Zn(2+) as cofactor.

In terms of biological role, binds the 23S rRNA. This chain is Large ribosomal subunit protein bL31, found in Desulforapulum autotrophicum (strain ATCC 43914 / DSM 3382 / VKM B-1955 / HRM2) (Desulfobacterium autotrophicum).